The following is a 96-amino-acid chain: Putative pterin-4-alpha-carbinolamine dehydratase (96 aa).

This sequence belongs to the pterin-4-alpha-carbinolamine dehydratase family.

The enzyme catalyses (4aS,6R)-4a-hydroxy-L-erythro-5,6,7,8-tetrahydrobiopterin = (6R)-L-erythro-6,7-dihydrobiopterin + H2O. This is Putative pterin-4-alpha-carbinolamine dehydratase from Prochlorococcus marinus (strain MIT 9303).